Consider the following 491-residue polypeptide: Putative F-box/LRR-repeat protein At3g59230 (491 aa).

The region spanning 11–57 (KDIINSLPEALIYHILSFLSTKEAAITSLLSRKWRYFFAFVPNLDFD) is the F-box domain. 7 LRR repeats span residues 127–154 (LSIASDTTYLFPSKVFVSKSLVRLRIEA), 156–182 (NGLAFGSLVIDVGDVSLPKLKTLYLDS), 184–209 (ELDYQIICLAKLLSGCHVLEELVMID), 325–351 (ASTVEVLTFRCKAIPIFNNLTRLTIES), 352–377 (NTKVGWDSLPNLLKNCPNLKTLVFQG), 419–444 (NDKTELEQTKHFLELMPHLEQLNIYY), and 472–491 (VQVISDNLTLSVTLPSSSSI).

The polypeptide is Putative F-box/LRR-repeat protein At3g59230 (Arabidopsis thaliana (Mouse-ear cress)).